The following is a 471-amino-acid chain: GDP-fucose protein O-fucosyltransferase 3 (471 aa).

Residues 1 to 8 are Cytoplasmic-facing; that stretch reads MNRMWEKK. The chain crosses the membrane as a helical; Signal-anchor for type II membrane protein span at residues 9-29; it reads FWISCFFIILFFILVTLQVMV. The Lumenal segment spans residues 30–471; sequence ELGRFEKRET…EFWNLVFKFQ (442 aa). N-linked (GlcNAc...) asparagine glycosylation is found at Asn-102, Asn-122, Asn-160, and Asn-310. The cysteines at positions 381 and 384 are disulfide-linked. Residue Asn-457 is glycosylated (N-linked (GlcNAc...) asparagine).

This sequence belongs to the glycosyltransferase 10 family.

Its subcellular location is the endoplasmic reticulum membrane. The enzyme catalyses L-threonyl-[protein] + GDP-beta-L-fucose = 3-O-(alpha-L-fucosyl)-L-threonyl-[protein] + GDP + H(+). The catalysed reaction is L-seryl-[protein] + GDP-beta-L-fucose = 3-O-(alpha-L-fucosyl)-L-seryl-[protein] + GDP + H(+). Its pathway is protein modification; protein glycosylation. In terms of biological role, protein O-fucosyltransferase that specifically catalyzes O-fucosylation of serine or threonine residues in EMI domains of target proteins. Attaches fucose through an O-glycosidic linkage. O-fucosylation of EMI domain-containing proteins may be required for facilitating protein folding and secretion. This chain is GDP-fucose protein O-fucosyltransferase 3 (fut10), found in Xenopus tropicalis (Western clawed frog).